The following is a 102-amino-acid chain: Small ribosomal subunit protein uS10 (102 aa).

The protein belongs to the universal ribosomal protein uS10 family. As to quaternary structure, part of the 30S ribosomal subunit.

Its function is as follows. Involved in the binding of tRNA to the ribosomes. The chain is Small ribosomal subunit protein uS10 from Streptococcus thermophilus (strain CNRZ 1066).